The sequence spans 523 residues: Pituitary adenylate cyclase-activating polypeptide type I receptor (523 aa).

An N-terminal signal peptide occupies residues Met1–Ala19. The Extracellular segment spans residues Met20–Ser151. Disulfide bonds link Cys33/Cys62, Cys53/Cys117, and Cys76/Cys133. 3 N-linked (GlcNAc...) asparagine glycosylation sites follow: Asn47, Asn59, and Asn116. The interval Glu124 to Tyr138 is important for ADCYAP1/PACAP ligand binding and specificity. Residues Glu124 to Tyr138 are important for ligand binding and specificity. A helical membrane pass occupies residues Val152–Arg176. Over Phe177–Phe186 the chain is Cytoplasmic. The helical transmembrane segment at Ile187 to Trp207 threads the bilayer. Topologically, residues Ile208–Thr222 are extracellular. Residues Val223 to Leu248 form a helical membrane-spanning segment. Cys225 and Cys295 form a disulfide bridge. Topologically, residues Tyr249 to Tyr266 are cytoplasmic. Residues Trp267–Tyr289 traverse the membrane as a helical segment. Residues Phe290–Ser301 lie on the Extracellular side of the membrane. The chain crosses the membrane as a helical span at residues Thr302 to Ile328. The Cytoplasmic segment spans residues Ile329–Ile346. The helical transmembrane segment at Tyr347 to Glu429 threads the bilayer. The Extracellular portion of the chain corresponds to Asn430–Arg434. The helical transmembrane segment at Glu435–Leu458 threads the bilayer. At Asn459–Thr523 the chain is on the cytoplasmic side. Phosphoserine occurs at positions 489 and 502.

It belongs to the G-protein coupled receptor 2 family. As to quaternary structure, interacts with maxadilan, a vasodilator peptide from Lutzomyia longipalpis saliva; the interaction results in ADCYAP1R1 activation. In terms of tissue distribution, hypothalamus, anterior pituitary, adrenal medulla, testicular germ cells.

It localises to the cell membrane. Functionally, g protein-coupled receptor activated by the neuropeptide pituitary adenylate cyclase-activating polypeptide (ADCYAP1/PACAP). Binds both PACAP27 and PACAP38 bioactive peptides. Ligand binding causes a conformation change that triggers signaling via guanine nucleotide-binding proteins (G proteins) and modulates the activity of downstream effectors. Activates cAMP-dependent pathway. May regulate the release of adrenocorticotropin, luteinizing hormone, growth hormone, prolactin, epinephrine, and catecholamine. May play a role in spermatogenesis and sperm motility. Causes smooth muscle relaxation and secretion in the gastrointestinal tract. The protein is Pituitary adenylate cyclase-activating polypeptide type I receptor of Rattus norvegicus (Rat).